Reading from the N-terminus, the 107-residue chain is Multidrug resistance protein mmr (107 aa).

A run of 4 helical transmembrane segments spans residues 2–19 (IYLY…ATSL), 29–51 (LWPT…LSIS), 58–80 (VAYA…LFLG), and 84–106 (SVMK…LAGA).

This sequence belongs to the drug/metabolite transporter (DMT) superfamily. Small multidrug resistance (SMR) (TC 2.A.7.1) family. Mmr subfamily.

Its subcellular location is the cell membrane. Its function is as follows. Multidrug efflux pump. Confers resistance to tetraphenylphosphonium (TPP), erythromycin, ethidium bromide, acriflavine, safranin O and pyronin Y. The protein is Multidrug resistance protein mmr (mmr) of Mycobacterium bovis (strain ATCC BAA-935 / AF2122/97).